Reading from the N-terminus, the 515-residue chain is Maturase K (515 aa).

It belongs to the intron maturase 2 family. MatK subfamily.

It is found in the plastid. It localises to the chloroplast. Usually encoded in the trnK tRNA gene intron. Probably assists in splicing its own and other chloroplast group II introns. The sequence is that of Maturase K from Pinus densiflora (Japanese red pine).